Reading from the N-terminus, the 475-residue chain is Glutamyl-tRNA(Gln) amidotransferase subunit A (475 aa).

Active-site charge relay system residues include Lys66 and Ser141. Ser165 functions as the Acyl-ester intermediate in the catalytic mechanism.

Belongs to the amidase family. GatA subfamily. In terms of assembly, heterotrimer of A, B and C subunits.

The enzyme catalyses L-glutamyl-tRNA(Gln) + L-glutamine + ATP + H2O = L-glutaminyl-tRNA(Gln) + L-glutamate + ADP + phosphate + H(+). Its function is as follows. Allows the formation of correctly charged Gln-tRNA(Gln) through the transamidation of misacylated Glu-tRNA(Gln) in organisms which lack glutaminyl-tRNA synthetase. The reaction takes place in the presence of glutamine and ATP through an activated gamma-phospho-Glu-tRNA(Gln). The protein is Glutamyl-tRNA(Gln) amidotransferase subunit A (gatA) of Thermotoga maritima (strain ATCC 43589 / DSM 3109 / JCM 10099 / NBRC 100826 / MSB8).